A 423-amino-acid chain; its full sequence is Heat shock transcription factor, X-linked (423 aa).

Over residues 1–25 (MEDKRSLSMARCEERNSRGQDHGLE) the composition is skewed to basic and acidic residues. 3 disordered regions span residues 1–56 (MEDK…STGS), 215–303 (KSAP…EGSQ), and 397–423 (PHSHRTSQYMPASDGPQAYPDYADQST). The DNA-binding element occupies 98–282 (PFPQKLWRLV…PATPVMVPDS (185 aa)). A Glycyl lysine isopeptide (Lys-Gly) (interchain with G-Cter in SUMO1) cross-link involves residue Lys-215. Residues 243–254 (HTSPNENDQVTP) are compositionally biased toward polar residues.

This sequence belongs to the HSF family. In terms of tissue distribution, testis-specific.

The protein localises to the nucleus. It localises to the cytoplasm. This Homo sapiens (Human) protein is Heat shock transcription factor, X-linked (HSFX1).